The chain runs to 457 residues: Heme sensor protein HssS (457 aa).

The next 2 helical transmembrane spans lie at 9-29 (IAIY…VLTN) and 164-184 (TFLA…VIAS). An HAMP domain is found at 186 to 238 (YSIIRPVKKLKLATERLIDGDFETPIKQTRKDEIGTLQYHFNKMRESLGQVDQ). Residues 246 to 456 (NVSHEIKTPL…TFTITLPNNS (211 aa)) form the Histidine kinase domain. His-249 carries the post-translational modification Phosphohistidine; by autocatalysis.

In terms of processing, autophosphorylated.

It localises to the cell membrane. The catalysed reaction is ATP + protein L-histidine = ADP + protein N-phospho-L-histidine.. Its function is as follows. Member of the two-component regulatory system HssS/HssR involved in intracellular heme homeostasis and tempering of staphylococcal virulence. HssS functions as a heme sensor histidine kinase which is autophosphorylated at a histidine residue and transfers its phosphate group to an aspartate residue of HssR. HssR/HssS activates the expression of hrtAB, an efflux pump, in response to extracellular heme, hemin, hemoglobin or blood. The chain is Heme sensor protein HssS (hssS) from Staphylococcus aureus (strain Mu3 / ATCC 700698).